The sequence spans 80 residues: Small ribosomal subunit protein bS18 (80 aa).

Belongs to the bacterial ribosomal protein bS18 family. In terms of assembly, part of the 30S ribosomal subunit. Forms a tight heterodimer with protein bS6.

In terms of biological role, binds as a heterodimer with protein bS6 to the central domain of the 16S rRNA, where it helps stabilize the platform of the 30S subunit. The protein is Small ribosomal subunit protein bS18 of Staphylococcus aureus (strain Mu3 / ATCC 700698).